A 497-amino-acid chain; its full sequence is Glycerol kinase (497 aa).

T13 provides a ligand contact to ADP. Residues T13, T14, and S15 each coordinate ATP. T13 contacts sn-glycerol 3-phosphate. R17 is a binding site for ADP. Positions 83, 84, and 135 each coordinate sn-glycerol 3-phosphate. Glycerol-binding residues include R83, E84, and Y135. At H231 the chain carries Phosphohistidine; by HPr. D245 serves as a coordination point for sn-glycerol 3-phosphate. Positions 245 and 246 each coordinate glycerol. Residues T267 and G310 each coordinate ADP. 4 residues coordinate ATP: T267, G310, Q314, and G411. Residues G411 and N415 each coordinate ADP.

It belongs to the FGGY kinase family. In terms of assembly, homotetramer and homodimer (in equilibrium). In terms of processing, the phosphoenolpyruvate-dependent sugar phosphotransferase system (PTS), including enzyme I, and histidine-containing protein (HPr) are required for the phosphorylation, which leads to the activation of the enzyme.

The catalysed reaction is glycerol + ATP = sn-glycerol 3-phosphate + ADP + H(+). It functions in the pathway polyol metabolism; glycerol degradation via glycerol kinase pathway; sn-glycerol 3-phosphate from glycerol: step 1/1. Activated by phosphorylation and inhibited by fructose 1,6-bisphosphate (FBP). Its function is as follows. Key enzyme in the regulation of glycerol uptake and metabolism. Catalyzes the phosphorylation of glycerol to yield sn-glycerol 3-phosphate. The chain is Glycerol kinase from Listeria monocytogenes serovar 1/2a (strain ATCC BAA-679 / EGD-e).